A 461-amino-acid chain; its full sequence is Steroidogenic factor 1 (461 aa).

A DNA-binding region (nuclear receptor) is located at residues aspartate 10–alanine 85. The segment at cysteine 13 to cysteine 33 adopts an NR C4-type zinc-finger fold. Lysine 34, lysine 38, and lysine 72 each carry N6-acetyllysine. Residues cysteine 49–cysteine 73 form an NR C4-type zinc finger. Residue lysine 119 forms a Glycyl lysine isopeptide (Lys-Gly) (interchain with G-Cter in SUMO) linkage. Residues lysine 119–lysine 150 form a disordered region. Residues glycine 127–methionine 139 are compositionally biased toward pro residues. Residue lysine 194 forms a Glycyl lysine isopeptide (Lys-Gly) (interchain with G-Cter in SUMO) linkage. Position 203 is a phosphoserine; by CDK7 (serine 203). Residues glycine 222–lysine 459 enclose the NR LBD domain. Positions leucine 230 to threonine 461 are important for dimerization. 3 residues coordinate a 1,2-diacyl-sn-glycero-3-phosphocholine: glycine 341, tyrosine 436, and lysine 440.

It belongs to the nuclear hormone receptor family. NR5 subfamily. As to quaternary structure, binds DNA as a monomer. Part of a complex consisting of SFPQ, NONO and NR5A1. Interacts with NR0B2, NCOA2 and PPARGC1A. Interacts with DGKQ and CDK7. Binds to and activated by HIPK3. Acetylation stimulates the transcriptional activity. Post-translationally, sumoylation reduces CDK7-mediated phosphorylation on Ser-203. In terms of processing, phosphorylated on Ser-203 by CDK7. This phosphorylation promotes transcriptional activity.

It localises to the nucleus. Its function is as follows. Transcriptional activator. Seems to be essential for sexual differentiation and formation of the primary steroidogenic tissues. Binds to the Ad4 site found in the promoter region of steroidogenic P450 genes such as CYP11A, CYP11B and CYP21B. Also regulates the AMH/Muellerian inhibiting substance gene as well as the AHCH and STAR genes. 5'-YCAAGGYC-3' and 5'-RRAGGTCA-3' are the consensus sequences for the recognition by NR5A1. The SFPQ-NONO-NR5A1 complex binds to the CYP17 promoter and regulates basal and cAMP-dependent transcriptional activity. Binds phosphatidylcholine and phospholipids with a phosphatidylinositol (PI) headgroup, in particular PI(3,4)P2 and PI(3,4,5)P3. Activated by the phosphorylation of NR5A1 by HIPK3 leading to increased steroidogenic gene expression upon cAMP signaling pathway stimulation. The polypeptide is Steroidogenic factor 1 (NR5A1) (Sus scrofa (Pig)).